Reading from the N-terminus, the 296-residue chain is Pantothenate synthetase (296 aa).

ATP is bound at residue 30–37 (MGNLHEGH). Catalysis depends on His-37, which acts as the Proton donor. Gln-61 serves as a coordination point for (R)-pantoate. Beta-alanine is bound at residue Gln-61. 149 to 152 (GEKD) contacts ATP. Gln-155 is a binding site for (R)-pantoate. ATP-binding positions include Val-178 and 186-189 (MSSR).

The protein belongs to the pantothenate synthetase family. In terms of assembly, homodimer.

The protein localises to the cytoplasm. It carries out the reaction (R)-pantoate + beta-alanine + ATP = (R)-pantothenate + AMP + diphosphate + H(+). It functions in the pathway cofactor biosynthesis; (R)-pantothenate biosynthesis; (R)-pantothenate from (R)-pantoate and beta-alanine: step 1/1. Functionally, catalyzes the condensation of pantoate with beta-alanine in an ATP-dependent reaction via a pantoyl-adenylate intermediate. The protein is Pantothenate synthetase of Vibrio atlanticus (strain LGP32) (Vibrio splendidus (strain Mel32)).